The sequence spans 65 residues: DNA gyrase inhibitor YacG (65 aa).

Zn(2+) is bound by residues C9, C12, C28, and C32. Residues 44–65 are disordered; the sequence is EKRIPSSSDLSESDDWSEEPKQ. The span at 54 to 65 shows a compositional bias: acidic residues; the sequence is SESDDWSEEPKQ.

This sequence belongs to the DNA gyrase inhibitor YacG family. As to quaternary structure, interacts with GyrB. Zn(2+) serves as cofactor.

Inhibits all the catalytic activities of DNA gyrase by preventing its interaction with DNA. Acts by binding directly to the C-terminal domain of GyrB, which probably disrupts DNA binding by the gyrase. The sequence is that of DNA gyrase inhibitor YacG from Escherichia coli O6:H1 (strain CFT073 / ATCC 700928 / UPEC).